A 400-amino-acid chain; its full sequence is Mu-type opioid receptor (400 aa).

At 1–68 the chain is on the extracellular side; the sequence is MDSSAAPTNA…CPPTGSPSMI (68 aa). Asn9, Asn12, Asn33, Asn40, and Asn48 each carry an N-linked (GlcNAc...) asparagine glycan. Residues 69-93 traverse the membrane as a helical segment; the sequence is TAITIMALYSIVCVVGLFGNFLVMY. Topologically, residues 94 to 106 are cytoplasmic; sequence VIVRYTKMKTATN. Residues 107-131 form a helical membrane-spanning segment; the sequence is IYIFNLALADALATSTLPFQSVNYL. Residues 132–142 are Extracellular-facing; sequence MGTWPFGTILC. Cysteines 142 and 219 form a disulfide. The chain crosses the membrane as a helical span at residues 143–165; it reads KIVISIDYYNMFTSIFTLCTMSV. The Cytoplasmic portion of the chain corresponds to 166–185; it reads DRYIAVCHPVKALDFRTPRN. Tyr168 bears the Phosphotyrosine mark. The chain crosses the membrane as a helical span at residues 186–207; it reads AKIINVCNWILSSAIGLPVMFM. Over 208-230 the chain is Extracellular; sequence ATTKYRQGSIDCTLTFSHPTWYW. The chain crosses the membrane as a helical span at residues 231-255; that stretch reads ENLLKICVFIFAFIMPVLIITVCYG. Over 256–279 the chain is Cytoplasmic; the sequence is LMILRLKSVRMLSGSKEKDRNLRR. A helical transmembrane segment spans residues 280–306; sequence ITRMVLVVVAVFIVCWTPIHIYVIIKA. At 307–314 the chain is on the extracellular side; sequence LVTIPETT. Residues 315–338 traverse the membrane as a helical segment; that stretch reads FQTVSWHFCIALGYTNSCLNPVLY. The NPxxY; plays a role in stabilizing the activated conformation of the receptor motif lies at 334–338; sequence NPVLY. The Cytoplasmic segment spans residues 339-400; it reads AFLDENFKRC…NLEAETAPLP (62 aa). Cys353 carries the S-palmitoyl cysteine lipid modification. A Phosphoserine modification is found at Ser365. A Phosphothreonine modification is found at Thr372. Ser377 bears the Phosphoserine mark. Thr396 carries the phosphothreonine modification.

It belongs to the G-protein coupled receptor 1 family. Forms homooligomers and heterooligomers with other GPCRs, such as OPRD1, OPRK1, OPRL1, NPFFR2, ADRA2A, SSTR2, CNR1 and CCR5 (probably in dimeric forms). Interacts with heterotrimeric G proteins; interaction with a heterotrimeric complex containing GNAI1, GNB1 and GNG2 stabilizes the active conformation of the receptor and increases its affinity for endomorphin-2, the synthetic opioid peptide DAMGO and for morphinan agonists. Interacts with PPL; the interaction disrupts agonist-mediated G-protein activation. Interacts (via C-terminus) with DNAJB4 (via C-terminus). Interacts with calmodulin; the interaction inhibits the constitutive activity of OPRM1; it abolishes basal and attenuates agonist-stimulated G-protein coupling. Interacts with FLNA, PLD2, RANBP9 and WLS and GPM6A. Interacts with RTP4. Interacts with SYP and GNAS. Interacts with RGS9, RGS17, RGS20, RGS4, PPP1R9B and HINT1. Phosphorylated. Differentially phosphorylated in basal and agonist-induced conditions. Agonist-mediated phosphorylation modulates receptor internalization. Phosphorylated by GRK2 in a agonist-dependent manner. Phosphorylation at Tyr-168 requires receptor activation, is dependent on non-receptor protein tyrosine kinase Src and results in a decrease in agonist efficacy by reducing G-protein coupling efficiency. Phosphorylated on tyrosine residues; the phosphorylation is involved in agonist-induced G-protein-independent receptor down-regulation. Phosphorylation at Ser-377 is involved in G-protein-dependent but not beta-arrestin-dependent activation of the ERK pathway. In terms of processing, ubiquitinated. A basal ubiquitination seems not to be related to degradation. Ubiquitination is increased upon formation of OPRM1:OPRD1 oligomers leading to proteasomal degradation; the ubiquitination is diminished by RTP4. As to expression, expressed in brain. Isoform 16 and isoform 17 are detected in brain.

The protein resides in the cell membrane. It localises to the cell projection. Its subcellular location is the axon. It is found in the perikaryon. The protein localises to the dendrite. The protein resides in the endosome. It localises to the cytoplasm. Functionally, receptor for endogenous opioids such as beta-endorphin and endomorphin. Receptor for natural and synthetic opioids including morphine, heroin, DAMGO, fentanyl, etorphine, buprenorphin and methadone. Also activated by enkephalin peptides, such as Met-enkephalin or Met-enkephalin-Arg-Phe, with higher affinity for Met-enkephalin-Arg-Phe. Agonist binding to the receptor induces coupling to an inactive GDP-bound heterotrimeric G-protein complex and subsequent exchange of GDP for GTP in the G-protein alpha subunit leading to dissociation of the G-protein complex with the free GTP-bound G-protein alpha and the G-protein beta-gamma dimer activating downstream cellular effectors. The agonist- and cell type-specific activity is predominantly coupled to pertussis toxin-sensitive G(i) and G(o) G alpha proteins, GNAI1, GNAI2, GNAI3 and GNAO1 isoforms Alpha-1 and Alpha-2, and to a lesser extent to pertussis toxin-insensitive G alpha proteins GNAZ and GNA15. They mediate an array of downstream cellular responses, including inhibition of adenylate cyclase activity and both N-type and L-type calcium channels, activation of inward rectifying potassium channels, mitogen-activated protein kinase (MAPK), phospholipase C (PLC), phosphoinositide/protein kinase (PKC), phosphoinositide 3-kinase (PI3K) and regulation of NF-kappa-B. Also couples to adenylate cyclase stimulatory G alpha proteins. The selective temporal coupling to G-proteins and subsequent signaling can be regulated by RGSZ proteins, such as RGS9, RGS17 and RGS4. Phosphorylation by members of the GPRK subfamily of Ser/Thr protein kinases and association with beta-arrestins is involved in short-term receptor desensitization. Beta-arrestins associate with the GPRK-phosphorylated receptor and uncouple it from the G-protein thus terminating signal transduction. The phosphorylated receptor is internalized through endocytosis via clathrin-coated pits which involves beta-arrestins. The activation of the ERK pathway occurs either in a G-protein-dependent or a beta-arrestin-dependent manner and is regulated by agonist-specific receptor phosphorylation. Acts as a class A G-protein coupled receptor (GPCR) which dissociates from beta-arrestin at or near the plasma membrane and undergoes rapid recycling. Receptor down-regulation pathways are varying with the agonist and occur dependent or independent of G-protein coupling. Endogenous ligands induce rapid desensitization, endocytosis and recycling. Heterooligomerization with other GPCRs can modulate agonist binding, signaling and trafficking properties. Its function is as follows. Couples to GNAS and is proposed to be involved in excitatory effects. In terms of biological role, does not bind agonists but may act through oligomerization with binding-competent OPRM1 isoforms and reduce their ligand binding activity. In Homo sapiens (Human), this protein is Mu-type opioid receptor (OPRM1).